Reading from the N-terminus, the 473-residue chain is Arginine biosynthesis bifunctional protein ArgJ, mitochondrial (473 aa).

6 residues coordinate substrate: T201, K230, T241, E328, N468, and T473. T241 serves as the catalytic Nucleophile.

This sequence belongs to the ArgJ family. As to quaternary structure, heterodimer of an alpha and a beta chain. The alpha and beta chains are autoproteolytically processed from a single precursor protein within the mitochondrion.

It is found in the mitochondrion matrix. The enzyme catalyses N(2)-acetyl-L-ornithine + L-glutamate = N-acetyl-L-glutamate + L-ornithine. It carries out the reaction L-glutamate + acetyl-CoA = N-acetyl-L-glutamate + CoA + H(+). Its pathway is amino-acid biosynthesis; L-arginine biosynthesis; L-ornithine and N-acetyl-L-glutamate from L-glutamate and N(2)-acetyl-L-ornithine (cyclic): step 1/1. It participates in amino-acid biosynthesis; L-arginine biosynthesis; N(2)-acetyl-L-ornithine from L-glutamate: step 1/4. Catalyzes two activities which are involved in the cyclic version of arginine biosynthesis: the synthesis of acetylglutamate from glutamate and acetyl-CoA, and of ornithine by transacetylation between acetylornithine and glutamate. This is Arginine biosynthesis bifunctional protein ArgJ, mitochondrial from Ajellomyces capsulatus (strain G186AR / H82 / ATCC MYA-2454 / RMSCC 2432) (Darling's disease fungus).